The following is a 342-amino-acid chain: N-acetyl-gamma-glutamyl-phosphate reductase (342 aa).

Cysteine 149 is an active-site residue.

This sequence belongs to the NAGSA dehydrogenase family. Type 1 subfamily.

It localises to the cytoplasm. The catalysed reaction is N-acetyl-L-glutamate 5-semialdehyde + phosphate + NADP(+) = N-acetyl-L-glutamyl 5-phosphate + NADPH + H(+). It participates in amino-acid biosynthesis; L-arginine biosynthesis; N(2)-acetyl-L-ornithine from L-glutamate: step 3/4. Catalyzes the NADPH-dependent reduction of N-acetyl-5-glutamyl phosphate to yield N-acetyl-L-glutamate 5-semialdehyde. This chain is N-acetyl-gamma-glutamyl-phosphate reductase, found in Cereibacter sphaeroides (strain ATCC 17029 / ATH 2.4.9) (Rhodobacter sphaeroides).